Consider the following 737-residue polypeptide: MSRGCPENNNFLTNNNQMVLDMILYPLIGIPQTINWETVARLVPGLTPKECVKRFDELKSCGSSPVDNQYNPLMAAGEGPVETLATYIKSSLLDAQGDFQETPVDQDTVSKAGRHSIATTRNCSSESENCTARNAGEETGDSEGPNMVIHVCDEAKSLKEDFICPRDLLISEMKYFAEYLSVDAQRWEEVDISVHCDVHIFNWLIKYVKRNTKDSKDCELPALEPGNVISILISSEFLKMDSLVEQCIQYCHKNMNAIVAAPCNMNCINVNLLTRIADLFTHNEIDDLKDKKDKFRSKLFCKKIERLFDPEYFNPDSRNNAATLYRCCLCKKLLTRETERRISCIPGKINVDRHGNIIYIHIRDKTWDVHEYLNSLFEELKSWRDVYWRLWGTINWLTCSRCYQAFLCIEFSHCQYHSEVVVYSSAVNSLNTVGTGIYPCCNQKVLRFDPTQLTKGCKVRDHMVLLHDQGENDDSLSCPTAKILDDLHKHKDVIAVPFLKDPVSDPGVGSCDEKGLEYEILLEPNTPWGSKTGELNAFLSLKNWTLQLKQQSLFSEEEEYTTGSEVTEDEVGDEEEISKKQRKKEKPKKFTKPPKKQLSSPCSQKKEKTLEKSTSRDVSPFVVSMQKNKWDATRSLRFNQDAQREDDQRRMSEITGHLIKMRLGDLDRVKAKESKEFAGGIYSRLEAQVKASVPVTARQNSSDKNQSNIPQRHLFNYVHSNFIRNSQKLETSQMFIN.

Positions 21–59 (DMILYPLIGIPQTINWETVARLVPGLTPKECVKRFDELK) constitute an SANT domain. Residues 147 to 255 (MVIHVCDEAK…QCIQYCHKNM (109 aa)) form the BTB domain. Residues 555–576 (SEEEEYTTGSEVTEDEVGDEEE) are compositionally biased toward acidic residues. Positions 555–618 (SEEEEYTTGS…TLEKSTSRDV (64 aa)) are disordered. Residues 580 to 595 (KQRKKEKPKKFTKPPK) show a composition bias toward basic residues. A compositionally biased stretch (basic and acidic residues) spans 604–615 (QKKEKTLEKSTS).

It belongs to the KIAA1841 family. As to quaternary structure, homodimer. Interacts (via the BTB domain) with HDAC1 and NCOR2.

Its function is as follows. Negatively regulates class switch recombination or isotype switching in splenic B-cells. The chain is SANT and BTB domain regulator of class switch recombination from Rattus norvegicus (Rat).